Consider the following 956-residue polypeptide: uncharacterized protein (956 aa).

The stretch at 918–942 (NSINEAIEKLNEAADAYQAIIDQQK) forms a coiled coil.

This is an uncharacterized protein from Acanthamoeba polyphaga (Amoeba).